A 105-amino-acid chain; its full sequence is Multidrug resistance protein EbrA (105 aa).

Helical transmembrane passes span Leu-2–Leu-22, Ala-35–Ile-55, Leu-57–Val-77, and Leu-84–Trp-104.

It belongs to the drug/metabolite transporter (DMT) superfamily. Small multidrug resistance (SMR) (TC 2.A.7.1) family. EbrA/EbrB subfamily. As to quaternary structure, the efflux pump is composed of EbrA and EbrB.

The protein localises to the cell membrane. Functionally, part of a multidrug efflux pump. Confers resistance to cationic lipophilic dyes such as ethidium bromide, acriflavine, pyronine Y and safranin O. The efflux is probably coupled to an influx of protons. The chain is Multidrug resistance protein EbrA (ebrA) from Bacillus subtilis (strain 168).